The following is a 432-amino-acid chain: Lysosomal acid phosphatase (432 aa).

The N-terminal stretch at 1-32 (MADGSCLGSGPQLGLIALLVVLLFSAVPLAQS) is a signal peptide. Residues 33-384 (RELRFVTLVY…TTSFIMTEET (352 aa)) lie on the Lumenal side of the membrane. The active-site Nucleophile is the His44. N-linked (GlcNAc...) asparagine glycans are attached at residues Asn94, Asn135, Asn179, Asn193, and Asn269. Intrachain disulfides connect Cys161–Cys373, Cys214–Cys313, and Cys348–Cys352. Asp290 functions as the Proton donor in the catalytic mechanism. N-linked (GlcNAc...) asparagine glycans are attached at residues Asn325 and Asn334. A helical transmembrane segment spans residues 385–405 (IIGLTIGAIALFIIIVVLMLL). Residues 406 to 432 (SCNEPKDDGYQHVSDEGDDHETKGLAM) are Cytoplasmic-facing.

Belongs to the histidine acid phosphatase family. Post-translationally, the membrane-bound form is converted to the soluble form by sequential proteolytic processing. First, the C-terminal cytoplasmic tail is removed. Cleavage by a lysosomal protease releases the soluble form in the lysosome lumen.

The protein resides in the lysosome membrane. The protein localises to the lysosome lumen. The catalysed reaction is a phosphate monoester + H2O = an alcohol + phosphate. The chain is Lysosomal acid phosphatase (acp2) from Xenopus laevis (African clawed frog).